The chain runs to 559 residues: 3-phosphoinositide-dependent protein kinase 1 (559 aa).

Residue tyrosine 9 is modified to Phosphotyrosine; by SRC and INSR. The residue at position 25 (serine 25) is a Phosphoserine. The segment at 25 to 83 (SPSMVRSQTEPGSSPGIPSGVSRQGSTMDGTTAEARPSTNPLQQHPAQLPPQPRKKRPE) is disordered. Low complexity predominate over residues 35–44 (PGSSPGIPSG). The span at 45–54 (VSRQGSTMDG) shows a compositional bias: polar residues. In terms of domain architecture, Protein kinase spans 85 to 345 (FKFGKILGEG…YGPLKAHPFF (261 aa)). ATP-binding positions include 95–97 (SFS) and lysine 114. Residues 116-160 (LEKRHIIKENKVPYVTRERDVMSRLDHPFFVKLYFTFQDDEKLYF) form a PIF-pocket region. Residues 163–165 (SYA) and glutamate 169 contribute to the ATP site. Aspartate 208 serves as the catalytic Proton acceptor. Glutamate 212 and aspartate 226 together coordinate ATP. Serine 244 carries the phosphoserine modification. At lysine 307 the chain carries N6-acetyllysine. Position 357 is a phosphothreonine; by MELK (threonine 357). A phosphotyrosine; by SRC and INSR mark is found at tyrosine 376 and tyrosine 379. A Phosphoserine modification is found at serine 396. Phosphoserine; by MAP3K5 is present on serine 397. Serine 399 bears the Phosphoserine mark. Serine 401 carries the phosphoserine; by MAP3K5 modification. Serine 413 is modified (phosphoserine). The region spanning 462-553 (KMGPVDKRKG…EVWRQQYQSN (92 aa)) is the PH domain. Serine 504 is subject to Phosphoserine; by PKC/PRKCQ. Residue threonine 516 is modified to Phosphothreonine; by autocatalysis. Residue serine 532 is modified to Phosphoserine; by PKC/PRKCQ.

The protein belongs to the protein kinase superfamily. AGC Ser/Thr protein kinase family. PDPK1 subfamily. Homodimer in its autoinhibited state. Active as monomer. Interacts with NPRL2, PAK1, PTK2B, GRB14, STRAP and IKKB. The Tyr-9 phosphorylated form interacts with SRC, RASA1 and CRK (via their SH2 domains). Interacts with SGK3 in a phosphorylation-dependent manner. The tyrosine-phosphorylated form interacts with PTPN6. The Ser-244 phosphorylated form interacts with YWHAH and YWHAQ. Binds INSR in response to insulin. Interacts (via PH domain) with SMAD3, SMAD4 and SMAD7. Interacts with PKN2; the interaction stimulates PDPK1 autophosphorylation, its PI(3,4,5)P3-dependent kinase activity toward 'Ser-473' of AKT1 but also activates its kinase activity toward PRKCD and PRKCZ. Interacts with PKN1 (via C-terminus) and PPARG. Post-translationally, phosphorylation on Ser-244 in the activation loop is required for full activity. PDPK1 itself can autophosphorylate Ser-244, leading to its own activation. Autophosphorylation is inhibited by the apoptotic C-terminus cleavage product of PKN2. Tyr-9 phosphorylation is critical for stabilization of both PDPK1 and the PDPK1/SRC complex via HSP90-mediated protection of PDPK1 degradation. Angiotensin II stimulates the tyrosine phosphorylation of PDPK1 in vascular smooth muscle in a calcium- and SRC-dependent manner. Phosphorylated on Tyr-9, Tyr-376 and Tyr-379 by INSR in response to insulin. Palmitate negatively regulates autophosphorylation at Ser-244 and palmitate-induced phosphorylation at Ser-532 and Ser-504 by PKC/PRKCQ negatively regulates its ability to phosphorylate PKB/AKT1. Phosphorylation at Thr-357 by MELK partially inhibits kinase activity, the inhibition is cooperatively enhanced by phosphorylation at Ser-397 and Ser-401 by MAP3K5. Monoubiquitinated in the kinase domain, deubiquitinated by USP4. Highly expressed in heart, brain, liver and testis, also expressed in embryonic cells.

It localises to the cytoplasm. The protein localises to the nucleus. The protein resides in the cell membrane. Its subcellular location is the cell junction. It is found in the focal adhesion. It carries out the reaction L-seryl-[protein] + ATP = O-phospho-L-seryl-[protein] + ADP + H(+). It catalyses the reaction L-threonyl-[protein] + ATP = O-phospho-L-threonyl-[protein] + ADP + H(+). Its activity is regulated as follows. Homodimerization regulates its activity by maintaining the kinase in an autoinhibitory conformation. NPRL2 down-regulates its activity by interfering with tyrosine phosphorylation at the Tyr-9, Tyr-376 and Tyr-379 residues. The 14-3-3 protein YWHAQ acts as a negative regulator by association with the residues surrounding the Ser-244 residue. STRAP positively regulates its activity by enhancing its autophosphorylation and by stimulating its dissociation from YWHAQ. SMAD2, SMAD3, SMAD4 and SMAD7 also positively regulate its activity by stimulating its dissociation from YWHAQ. Activated by phosphorylation on Tyr-9, Tyr-376 and Tyr-379 by INSR in response to insulin. In terms of biological role, serine/threonine kinase which acts as a master kinase, phosphorylating and activating a subgroup of the AGC family of protein kinases. Its targets include: protein kinase B (PKB/AKT1, PKB/AKT2, PKB/AKT3), p70 ribosomal protein S6 kinase (RPS6KB1), p90 ribosomal protein S6 kinase (RPS6KA1, RPS6KA2 and RPS6KA3), cyclic AMP-dependent protein kinase (PRKACA), protein kinase C (PRKCD and PRKCZ), serum and glucocorticoid-inducible kinase (SGK1, SGK2 and SGK3), p21-activated kinase-1 (PAK1), TSSK3, protein kinase PKN (PKN1 and PKN2). Plays a central role in the transduction of signals from insulin by providing the activating phosphorylation to PKB/AKT1, thus propagating the signal to downstream targets controlling cell proliferation and survival, as well as glucose and amino acid uptake and storage. Negatively regulates the TGF-beta-induced signaling by: modulating the association of SMAD3 and SMAD7 with TGF-beta receptor, phosphorylating SMAD2, SMAD3, SMAD4 and SMAD7, preventing the nuclear translocation of SMAD3 and SMAD4 and the translocation of SMAD7 from the nucleus to the cytoplasm in response to TGF-beta. Activates PPARG transcriptional activity and promotes adipocyte differentiation. Activates the NF-kappa-B pathway via phosphorylation of IKKB. The tyrosine phosphorylated form is crucial for the regulation of focal adhesions by angiotensin II. Controls proliferation, survival, and growth of developing pancreatic cells. Participates in the regulation of Ca(2+) entry and Ca(2+)-activated K(+) channels of mast cells. Essential for the motility of vascular endothelial cells (ECs) and is involved in the regulation of their chemotaxis. Plays a critical role in cardiac homeostasis by serving as a dual effector for cell survival and beta-adrenergic response. Plays an important role during thymocyte development by regulating the expression of key nutrient receptors on the surface of pre-T cells and mediating Notch-induced cell growth and proliferative responses. Provides negative feedback inhibition to toll-like receptor-mediated NF-kappa-B activation in macrophages. This chain is 3-phosphoinositide-dependent protein kinase 1 (Pdpk1), found in Mus musculus (Mouse).